A 58-amino-acid chain; its full sequence is Photosystem II reaction center protein K (58 aa).

The propeptide occupies 1–21 (MLVISNVYPSNLFTLINPFFA). A helical transmembrane segment spans residues 29 to 49 (IFDPIVDVMPIIPVFFFLLAF).

This sequence belongs to the PsbK family. PSII is composed of 1 copy each of membrane proteins PsbA, PsbB, PsbC, PsbD, PsbE, PsbF, PsbH, PsbI, PsbJ, PsbK, PsbL, PsbM, PsbT, PsbX, PsbY, PsbZ, Psb30/Ycf12, at least 3 peripheral proteins of the oxygen-evolving complex and a large number of cofactors. It forms dimeric complexes.

Its subcellular location is the plastid. The protein resides in the chloroplast thylakoid membrane. Its function is as follows. One of the components of the core complex of photosystem II (PSII). PSII is a light-driven water:plastoquinone oxidoreductase that uses light energy to abstract electrons from H(2)O, generating O(2) and a proton gradient subsequently used for ATP formation. It consists of a core antenna complex that captures photons, and an electron transfer chain that converts photonic excitation into a charge separation. The polypeptide is Photosystem II reaction center protein K (Psilotum nudum (Whisk fern)).